Here is a 29-residue protein sequence, read N- to C-terminus: Brevinin-2Rc (29 aa).

Cys-23 and Cys-29 are joined by a disulfide.

In terms of tissue distribution, expressed by the skin glands.

The protein resides in the secreted. Antimicrobial peptide. In Pelophylax ridibundus (Marsh frog), this protein is Brevinin-2Rc.